We begin with the raw amino-acid sequence, 634 residues long: MQLLLIHSDYIEYETKKQTPVAEKIEESLKSGRLEEALTAFTAVESVDEANPEEAIKKAVSEIEKVAAQVKTNRIMLYPYAHLSSDLSSPKVAVQVLKGMEAALSSRYEVKRAPFGWYKAFTVSCKGHPLSELSRSIRPEGAAKAEVKTETCEKEEVVSEALKAEGTARSYWRILTPDGELHEVEGFDLTPYPKLQQFVNYEISKSRAVERAPPHVELMRRLELADYEPGSDSGNMRYYPKGRLVKSLLENYVLDVATEFGAMEVETPLMYDMNHPTLKKYLDRFPARQYSIESDKRHMFLRFAACFGQFLMNHDMTISYKNLPLRMIEMTRYSFRKEQRGELVGLRRLRAFTMPDMHTLCEDMDQAVNQFKEQYDLCISVLENVGIHINDYEVAIRFTRDFYEANKDLVVNMAKTVNKPVLVEMWDTRFFYFVLKFEFNFVDALAKASALSTVQIDVENAERYDISYVNADGKLERPTVLHCSPSGAIERCIYALLEKAAMETEEGKVPMLPVWLSPTQVRIVPISEKHIAFAEEVAKKLDFRVDVDDRDLSIGKKVREAGREWVPYVVVIGDKEMEESTINVTIREESGQDKPKKVQMTPEELNARIKEETSGKPYRKLPLAKYLSARPKFL.

The tract at residues 1–142 (MQLLLIHSDY…LSRSIRPEGA (142 aa)) is editing domain. The segment at 214 to 513 (PHVELMRRLE…TEEGKVPMLP (300 aa)) is catalytic. Residues C306, H358, and H482 each coordinate Zn(2+).

This sequence belongs to the class-II aminoacyl-tRNA synthetase family. Homodimer. Zn(2+) serves as cofactor.

The protein resides in the cytoplasm. It catalyses the reaction tRNA(Thr) + L-threonine + ATP = L-threonyl-tRNA(Thr) + AMP + diphosphate + H(+). In terms of biological role, catalyzes the attachment of threonine to tRNA(Thr) in a two-step reaction: L-threonine is first activated by ATP to form Thr-AMP and then transferred to the acceptor end of tRNA(Thr). Edits incorrectly charged L-seryl-tRNA(Thr) probably via its editing domain (tested with total bovine tRNA). Activates L-serine, but does not detectably transfer it to tRNA (tested with total bovine tRNA). The protein is Threonine--tRNA ligase of Methanosarcina mazei (strain ATCC BAA-159 / DSM 3647 / Goe1 / Go1 / JCM 11833 / OCM 88) (Methanosarcina frisia).